A 286-amino-acid polypeptide reads, in one-letter code: NH(3)-dependent NAD(+) synthetase (286 aa).

51–58 provides a ligand contact to ATP; sequence GISGGVDS. Position 57 (Asp57) interacts with Mg(2+). Arg148 serves as a coordination point for deamido-NAD(+). Position 168 (Thr168) interacts with ATP. Residue Glu173 coordinates Mg(2+). Deamido-NAD(+)-binding residues include Lys181 and Asp188. Lys197 and Thr219 together coordinate ATP. Residue 268–269 coordinates deamido-NAD(+); it reads HK.

Belongs to the NAD synthetase family. In terms of assembly, homodimer.

The enzyme catalyses deamido-NAD(+) + NH4(+) + ATP = AMP + diphosphate + NAD(+) + H(+). It functions in the pathway cofactor biosynthesis; NAD(+) biosynthesis; NAD(+) from deamido-NAD(+) (ammonia route): step 1/1. Functionally, catalyzes the ATP-dependent amidation of deamido-NAD to form NAD. Uses ammonia as a nitrogen source. This Paraburkholderia phytofirmans (strain DSM 17436 / LMG 22146 / PsJN) (Burkholderia phytofirmans) protein is NH(3)-dependent NAD(+) synthetase.